A 211-amino-acid polypeptide reads, in one-letter code: Small ribosomal subunit protein uS4 (211 aa).

Positions 99–160 (RRLDSVVYQM…KSRNIQQVRE (62 aa)) constitute an S4 RNA-binding domain.

It belongs to the universal ribosomal protein uS4 family. In terms of assembly, part of the 30S ribosomal subunit. Contacts protein S5. The interaction surface between S4 and S5 is involved in control of translational fidelity.

Its function is as follows. One of the primary rRNA binding proteins, it binds directly to 16S rRNA where it nucleates assembly of the body of the 30S subunit. Functionally, with S5 and S12 plays an important role in translational accuracy. The polypeptide is Small ribosomal subunit protein uS4 (Petrotoga mobilis (strain DSM 10674 / SJ95)).